A 285-amino-acid chain; its full sequence is Glutamate racemase (285 aa).

Substrate contacts are provided by residues 30 to 31 and 62 to 63; these read DS and YG. Cys94 acts as the Proton donor/acceptor in catalysis. 95–96 is a binding site for substrate; it reads NT. Cys206 (proton donor/acceptor) is an active-site residue. Residue 207-208 participates in substrate binding; that stretch reads TH.

This sequence belongs to the aspartate/glutamate racemases family.

The catalysed reaction is L-glutamate = D-glutamate. It functions in the pathway cell wall biogenesis; peptidoglycan biosynthesis. Its function is as follows. Provides the (R)-glutamate required for cell wall biosynthesis. This chain is Glutamate racemase, found in Pectobacterium carotovorum subsp. carotovorum (strain PC1).